The sequence spans 420 residues: D-tagatose-1,6-bisphosphate aldolase subunit GatZ (420 aa).

The protein belongs to the GatZ/KbaZ family. GatZ subfamily. As to quaternary structure, forms a complex with GatY.

It participates in carbohydrate metabolism; D-tagatose 6-phosphate degradation; D-glyceraldehyde 3-phosphate and glycerone phosphate from D-tagatose 6-phosphate: step 2/2. Functionally, component of the tagatose-1,6-bisphosphate aldolase GatYZ that is required for full activity and stability of the Y subunit. Could have a chaperone-like function for the proper and stable folding of GatY. When expressed alone, GatZ does not show any aldolase activity. Is involved in the catabolism of galactitol. The sequence is that of D-tagatose-1,6-bisphosphate aldolase subunit GatZ from Escherichia coli (strain SE11).